We begin with the raw amino-acid sequence, 168 residues long: Nuclear cap-binding protein subunit 2 (168 aa).

MRNA is bound by residues Y23, Y46, 115–119 (RTDWD), 126–130 (RQYGR), and 136–137 (QV). The 79-residue stretch at 43–121 (STLYVGNLSF…RIVRTDWDAG (79 aa)) folds into the RRM domain.

The protein belongs to the RRM NCBP2 family. Component of the nuclear cap-binding complex (CBC), a heterodimer composed of NCBP1/CBP80 and NCBP2/CBP20 that interacts with m7GpppG-capped RNA.

It is found in the nucleus. The protein resides in the cytoplasm. In terms of biological role, component of the cap-binding complex (CBC), which binds co-transcriptionally to the 5' cap of pre-mRNAs and is involved in various processes such as pre-mRNA splicing, translation regulation, nonsense-mediated mRNA decay, RNA-mediated gene silencing (RNAi) by microRNAs (miRNAs) and mRNA export. The CBC complex is involved in mRNA export from the nucleus, leading to the recruitment of the mRNA export machinery to the 5' end of mRNA and to mRNA export in a 5' to 3' direction through the nuclear pore. The CBC complex is also involved in mediating U snRNA and intronless mRNAs export from the nucleus. The CBC complex is essential for a pioneer round of mRNA translation, before steady state translation when the CBC complex is replaced by cytoplasmic cap-binding protein eIF4E. The pioneer round of mRNA translation mediated by the CBC complex plays a central role in nonsense-mediated mRNA decay (NMD), NMD only taking place in mRNAs bound to the CBC complex, but not on eIF4E-bound mRNAs. The CBC complex enhances NMD in mRNAs containing at least one exon-junction complex (EJC), promoting the interaction between UPF1 and UPF2. The CBC complex is also involved in 'failsafe' NMD, which is independent of the EJC complex, while it does not participate in Staufen-mediated mRNA decay (SMD). During cell proliferation, the CBC complex is also involved in microRNAs (miRNAs) biogenesis via its interaction with SRRT/ARS2, thereby being required for miRNA-mediated RNA interference. The CBC complex also acts as a negative regulator of PARN, thereby acting as an inhibitor of mRNA deadenylation. In the CBC complex, NCBP2/CBP20 recognizes and binds capped RNAs (m7GpppG-capped RNA) but requires NCBP1/CBP80 to stabilize the movement of its N-terminal loop and lock the CBC into a high affinity cap-binding state with the cap structure. The conventional cap-binding complex with NCBP2 binds both small nuclear RNA (snRNA) and messenger (mRNA) and is involved in their export from the nucleus. The polypeptide is Nuclear cap-binding protein subunit 2 (NCBP2) (Gallus gallus (Chicken)).